The chain runs to 220 residues: MELYLDTANVAEVERLARIYPLAGVTTNPSIIAAGKVPVWDVLPRLQKAVGPEGTLFAQTMSRDAQGMVEEAKRLSNAVPGIVVKIPVTAEGLAAIKLLKKEGIPTLGTAVYSASQGLLAALAGAKYVAPYVNRVDAQGGDGIRMVQELQSLLEMHAPESKVLAASFKTPRQALDCLLAGCEAITLPLDVAQQMLGTPAVESAIEKFEQDWNNAFGALNL.

The Schiff-base intermediate with substrate role is filled by K85.

It belongs to the transaldolase family. Type 3A subfamily. Homodecamer.

The protein localises to the cytoplasm. The catalysed reaction is beta-D-fructose 6-phosphate = dihydroxyacetone + D-glyceraldehyde 3-phosphate. Catalyzes the reversible formation of fructose 6-phosphate from dihydroxyacetone and D-glyceraldehyde 3-phosphate via an aldolization reaction. This chain is Fructose-6-phosphate aldolase, found in Klebsiella pneumoniae subsp. pneumoniae (strain ATCC 700721 / MGH 78578).